The following is a 475-amino-acid chain: MMRRVTSSLPSALKLGRSLGPNVRFSGGAAAVEASPAIPPNSSSGKTLVRNMKPRELMQELDNYIIGQTEAKKAVAVALRNRWRRHQVDAAIREEISPKNILMIGPTGVGKTEIARRLAKLVDAPFIKVEATKFTEVGFHGRDVESIIEDLYKASLTQTKQNIMRRHEETARQKAENRILKALAGVSDGFREHLRSGALDDIEVIVELQEKKEKPKNSGTNEGVFISLEIPSSIGGQRPQTVKKVMKIKDAIPAVLQEELDKIVDTEDVSAEALRACEEDGIVVIDEIDKIVTASGGYKGHQASAEGVQQDLLPLVEGTTVSTKGNVQIKTDKILFICSGAFHSVKPSDMLAELQGRLPIRVELKPLTKEDFHRIITEPRYNLIKQHVMMMKTEGVDLVFTDDALWEIASIAAHINSTVQNIGARRLITITEKVVEEVSFDGPDRKGETFVIDAAYVRNSVESMMKKVDIKKFIL.

A mitochondrion-targeting transit peptide spans 1–27 (MMRRVTSSLPSALKLGRSLGPNVRFSG). ATP contacts are provided by residues isoleucine 66, 108–113 (GVGKTE), aspartate 286, glutamate 353, and arginine 425.

The protein belongs to the ClpX chaperone family. HslU subfamily. A double ring-shaped homohexamer of HslV is capped on each side by a ring-shaped HslU homohexamer. The assembly of the HslU/HslV complex (HslVU) is dependent on binding of ATP.

It localises to the mitochondrion matrix. It is found in the kinetoplast. In terms of biological role, ATPase subunit of a proteasome-like degradation complex; this subunit has chaperone activity. The binding of ATP and its subsequent hydrolysis by HslU are essential for unfolding of protein substrates subsequently hydrolyzed by HslV. HslU recognizes the N-terminal part of its protein substrates and unfolds these before they are guided to HslV for hydrolysis. The HslVU protease complex functions in mitochondrial DNA replication by regulating DNA helicase PIF2 protein levels. This chain is ATP-dependent protease ATPase subunit HslU1 (HslU1), found in Trypanosoma brucei brucei (strain 927/4 GUTat10.1).